The following is a 401-amino-acid chain: Argininosuccinate synthase (401 aa).

9-17 (AYSGGLDTS) contributes to the ATP binding site. Residue tyrosine 88 coordinates L-citrulline. Residue glycine 118 coordinates ATP. Residues threonine 120, asparagine 124, and aspartate 125 each coordinate L-aspartate. Asparagine 124 contacts L-citrulline. Residues arginine 128, serine 177, serine 186, glutamate 262, and tyrosine 274 each contribute to the L-citrulline site.

This sequence belongs to the argininosuccinate synthase family. Type 1 subfamily. As to quaternary structure, homotetramer.

The protein localises to the cytoplasm. The enzyme catalyses L-citrulline + L-aspartate + ATP = 2-(N(omega)-L-arginino)succinate + AMP + diphosphate + H(+). It functions in the pathway amino-acid biosynthesis; L-arginine biosynthesis; L-arginine from L-ornithine and carbamoyl phosphate: step 2/3. This chain is Argininosuccinate synthase, found in Chlorobaculum parvum (strain DSM 263 / NCIMB 8327) (Chlorobium vibrioforme subsp. thiosulfatophilum).